Consider the following 295-residue polypeptide: Caffeine dehydrogenase subunit beta (295 aa).

Residues 1 to 178 form the FAD-binding PCMH-type domain; sequence MKPTAFDYIR…CEIRIPVPSQ (178 aa). FAD is bound by residues 32-36 and 111-115; these read AGGQS and TLGGN.

In terms of assembly, heterotrimer composed of an alpha (CdhA), a beta (CdhB) and a gamma (CdhC) subunit.

The catalysed reaction is caffeine + a ubiquinone + H2O = 1,3,7-trimethylurate + a ubiquinol. The enzyme catalyses ubiquinone-0 + caffeine + H2O = ubiquinol-0 + 1,3,7-trimethylurate. It carries out the reaction theobromine + a ubiquinone + H2O = 3,7-dimethylurate + a ubiquinol. Its function is as follows. Component of the caffeine dehydrogenase complex that catalyzes the hydrolytical oxidation of 1,3,7-trimethylxanthine (caffeine) by incorporation of an oxygen atom originating from a water molecule into position C-8 to produce 1,3,7-trimethyluric acid (TMU). Coenzyme Q0 (ubiquinone-0) is the preferred electron acceptor and, to a lesser extent, coenzyme Q2 (ubiquinone-2) can also be used, but oxygen and NAD(P)(+) cannot. Is involved in a caffeine degradation pathway that allows Pseudomonas sp. strain CBB1 to grow on caffeine as the sole carbon and nitrogen source. Is also active with theobromine as substrate, but shows a very poor activity with theophylline and is not active with xanthine, 3-methylxanthine, 7-methylxanthine, TMU, and 3,7-dimethylurate. The sequence is that of Caffeine dehydrogenase subunit beta from Pseudomonas sp. (strain CBB1).